Reading from the N-terminus, the 1318-residue chain is DNA-directed RNA polymerase subunit beta' (1318 aa).

Residues C221, C295, C302, and C305 each contribute to the Zn(2+) site.

This sequence belongs to the RNA polymerase beta' chain family. RpoC2 subfamily. As to quaternary structure, in cyanobacteria the RNAP catalytic core is composed of 2 alpha, 1 beta, 1 beta', 1 gamma and 1 omega subunit. When a sigma factor is associated with the core the holoenzyme is formed, which can initiate transcription. Zn(2+) serves as cofactor.

The catalysed reaction is RNA(n) + a ribonucleoside 5'-triphosphate = RNA(n+1) + diphosphate. DNA-dependent RNA polymerase catalyzes the transcription of DNA into RNA using the four ribonucleoside triphosphates as substrates. The polypeptide is DNA-directed RNA polymerase subunit beta' (Synechococcus elongatus (strain ATCC 33912 / PCC 7942 / FACHB-805) (Anacystis nidulans R2)).